The primary structure comprises 489 residues: Glycogen synthase (489 aa).

Lysine 17 contributes to the ADP-alpha-D-glucose binding site.

This sequence belongs to the glycosyltransferase 1 family. Bacterial/plant glycogen synthase subfamily.

It carries out the reaction [(1-&gt;4)-alpha-D-glucosyl](n) + ADP-alpha-D-glucose = [(1-&gt;4)-alpha-D-glucosyl](n+1) + ADP + H(+). The protein operates within glycan biosynthesis; glycogen biosynthesis. In terms of biological role, synthesizes alpha-1,4-glucan chains using ADP-glucose. The protein is Glycogen synthase of Nitratidesulfovibrio vulgaris (strain ATCC 29579 / DSM 644 / CCUG 34227 / NCIMB 8303 / VKM B-1760 / Hildenborough) (Desulfovibrio vulgaris).